Consider the following 275-residue polypeptide: 4-diphosphocytidyl-2-C-methyl-D-erythritol kinase (275 aa).

K8 is an active-site residue. P86–S96 provides a ligand contact to ATP. D125 is a catalytic residue.

It belongs to the GHMP kinase family. IspE subfamily.

It catalyses the reaction 4-CDP-2-C-methyl-D-erythritol + ATP = 4-CDP-2-C-methyl-D-erythritol 2-phosphate + ADP + H(+). It functions in the pathway isoprenoid biosynthesis; isopentenyl diphosphate biosynthesis via DXP pathway; isopentenyl diphosphate from 1-deoxy-D-xylulose 5-phosphate: step 3/6. Functionally, catalyzes the phosphorylation of the position 2 hydroxy group of 4-diphosphocytidyl-2C-methyl-D-erythritol. The protein is 4-diphosphocytidyl-2-C-methyl-D-erythritol kinase of Thermus thermophilus (strain ATCC BAA-163 / DSM 7039 / HB27).